Here is a 194-residue protein sequence, read N- to C-terminus: Adenylate kinase isoenzyme 1 (194 aa).

At alanine 2 the chain carries N-acetylalanine. 18-23 (GSGKGT) lines the ATP pocket. The interval 38–67 (SSGDLLRAEVASGSERGKQLQAIMQKGELV) is NMP. AMP is bound by residues serine 39, arginine 44, 65-67 (ELV), 94-97 (GYPR), and glutamine 101. Positions 131-141 (KRGQTSGRSDD) are LID. Arginine 132 provides a ligand contact to ATP. Residues arginine 138 and arginine 149 each contribute to the AMP site. Leucine 177 contributes to the ATP binding site.

The protein belongs to the adenylate kinase family. AK1 subfamily. As to quaternary structure, monomer. It depends on Mg(2+) as a cofactor.

The protein resides in the cytoplasm. The catalysed reaction is a ribonucleoside 5'-phosphate + ATP = a ribonucleoside 5'-diphosphate + ADP. It catalyses the reaction AMP + ATP = 2 ADP. It carries out the reaction dAMP + ATP = dADP + ADP. The enzyme catalyses dATP + AMP = dADP + ADP. The catalysed reaction is dAMP + dATP = 2 dADP. It catalyses the reaction a 2'-deoxyribonucleoside 5'-diphosphate + ATP = a 2'-deoxyribonucleoside 5'-triphosphate + ADP. It carries out the reaction a ribonucleoside 5'-diphosphate + ATP = a ribonucleoside 5'-triphosphate + ADP. The enzyme catalyses CDP + GTP = CTP + GDP. The catalysed reaction is GDP + ATP = GTP + ADP. It catalyses the reaction UDP + ATP = UTP + ADP. It carries out the reaction GTP + UDP = UTP + GDP. The enzyme catalyses dTDP + GTP = dTTP + GDP. The catalysed reaction is dCDP + GTP = dCTP + GDP. It catalyses the reaction dGDP + ATP = dGTP + ADP. It carries out the reaction dADP + GTP = dATP + GDP. The enzyme catalyses thiamine diphosphate + ADP = thiamine triphosphate + AMP. In terms of biological role, catalyzes the reversible transfer of the terminal phosphate group between ATP and AMP. Also displays broad nucleoside diphosphate kinase activity. Plays an important role in cellular energy homeostasis and in adenine nucleotide metabolism. Also catalyzes at a very low rate the synthesis of thiamine triphosphate (ThTP) from thiamine diphosphate (ThDP) and ADP. This chain is Adenylate kinase isoenzyme 1 (ak1), found in Cyprinus carpio (Common carp).